A 149-amino-acid chain; its full sequence is Large ribosomal subunit protein uL22 (149 aa).

This sequence belongs to the universal ribosomal protein uL22 family. Part of the 50S ribosomal subunit.

In terms of biological role, this protein binds specifically to 23S rRNA; its binding is stimulated by other ribosomal proteins, e.g. L4, L17, and L20. It is important during the early stages of 50S assembly. It makes multiple contacts with different domains of the 23S rRNA in the assembled 50S subunit and ribosome. Its function is as follows. The globular domain of the protein is located near the polypeptide exit tunnel on the outside of the subunit, while an extended beta-hairpin is found that lines the wall of the exit tunnel in the center of the 70S ribosome. In Petrotoga mobilis (strain DSM 10674 / SJ95), this protein is Large ribosomal subunit protein uL22.